We begin with the raw amino-acid sequence, 274 residues long: Thiamine kinase (274 aa).

This sequence belongs to the thiamine kinase family.

The catalysed reaction is thiamine + ATP = thiamine phosphate + ADP + H(+). It functions in the pathway cofactor biosynthesis; thiamine diphosphate biosynthesis; thiamine phosphate from thiamine: step 1/1. Functionally, catalyzes the ATP-dependent phosphorylation of thiamine to thiamine phosphate. Is involved in thiamine salvage. The protein is Thiamine kinase of Shigella dysenteriae serotype 1 (strain Sd197).